The sequence spans 135 residues: Ribonuclease VapC26 (135 aa).

The region spanning 1–118 is the PINc domain; the sequence is MIIDTSALLA…TRTILTLDRR (118 aa). The Mg(2+) site is built by Asp4 and Asp97.

This sequence belongs to the PINc/VapC protein family. Mg(2+) is required as a cofactor.

Functionally, toxic component of a type II toxin-antitoxin (TA) system. An RNase. Upon expression in M.smegmatis inhibits colony formation. Its toxic effect is neutralized by coexpression with cognate antitoxin VapB26. The chain is Ribonuclease VapC26 from Mycobacterium tuberculosis (strain ATCC 25618 / H37Rv).